The chain runs to 396 residues: Metallophosphoesterase 1 (396 aa).

A helical membrane pass occupies residues 28-48 (TVVIISVLLFCEYFIYYLVLF). Positions 75, 117, 155, 249, 303, and 305 each coordinate a divalent metal cation. A helical membrane pass occupies residues 356 to 376 (TVLTMYGAAAGFLMILILVHF).

It belongs to the metallophosphoesterase superfamily. MPPE1 family. In terms of assembly, interacts with GPI-anchor proteins (via the GPI portion). Interacts with TMED10. The cofactor is Mn(2+).

The protein resides in the endoplasmic reticulum-Golgi intermediate compartment membrane. Functionally, metallophosphoesterase that catalyzes the removal of a side-chain ethanolamine-phosphate (EtNP) from the second mannose of the GPI-anchor protein intermediate. Participates in the glycan remodeling steps of GPI-anchor maturation to allow an efficient transport of GPI-anchor proteins from the endoplasmic reticulum to the Golgi. The chain is Metallophosphoesterase 1 from Mus musculus (Mouse).